Consider the following 116-residue polypeptide: uncharacterized protein (116 aa).

The region spanning 5–113 is the VOC domain; that stretch reads EVKMVVLSTE…TGNGLVFYSP (109 aa). Residue K76 forms an Isoglutamyl lysine isopeptide (Lys-Gln) (interchain with Q-Cter in protein Pup) linkage.

This is an uncharacterized protein from Mycolicibacterium smegmatis (strain ATCC 700084 / mc(2)155) (Mycobacterium smegmatis).